The sequence spans 598 residues: Phospholipase B-like protein G (598 aa).

A signal peptide spans 1 to 24; sequence MIKSYYLFFIILIFLIFINNFILC. N-linked (GlcNAc...) asparagine glycans are attached at residues Asn50, Asn98, Asn173, Asn341, Asn368, Asn450, Asn480, Asn526, and Asn576.

It belongs to the phospholipase B-like family.

Its subcellular location is the secreted. Functionally, probable phospholipase. This is Phospholipase B-like protein G (plbG) from Dictyostelium discoideum (Social amoeba).